We begin with the raw amino-acid sequence, 310 residues long: Porphobilinogen deaminase (310 aa).

C242 carries the S-(dipyrrolylmethanemethyl)cysteine modification.

Belongs to the HMBS family. As to quaternary structure, monomer. Dipyrromethane is required as a cofactor.

The enzyme catalyses 4 porphobilinogen + H2O = hydroxymethylbilane + 4 NH4(+). It functions in the pathway porphyrin-containing compound metabolism; protoporphyrin-IX biosynthesis; coproporphyrinogen-III from 5-aminolevulinate: step 2/4. Functionally, tetrapolymerization of the monopyrrole PBG into the hydroxymethylbilane pre-uroporphyrinogen in several discrete steps. In Shewanella pealeana (strain ATCC 700345 / ANG-SQ1), this protein is Porphobilinogen deaminase.